A 258-amino-acid chain; its full sequence is Pimeloyl-[acyl-carrier protein] methyl ester esterase (258 aa).

Residues tryptophan 22, 84–85 (SL), and 145–149 (FLAIQ) contribute to the substrate site. Serine 84 acts as the Nucleophile in catalysis. Catalysis depends on residues aspartate 209 and histidine 238. Residue histidine 238 participates in substrate binding.

Belongs to the AB hydrolase superfamily. Carboxylesterase BioH family. In terms of assembly, monomer.

It localises to the cytoplasm. It catalyses the reaction 6-carboxyhexanoyl-[ACP] methyl ester + H2O = 6-carboxyhexanoyl-[ACP] + methanol + H(+). It participates in cofactor biosynthesis; biotin biosynthesis. Functionally, the physiological role of BioH is to remove the methyl group introduced by BioC when the pimeloyl moiety is complete. It allows to synthesize pimeloyl-ACP via the fatty acid synthetic pathway through the hydrolysis of the ester bonds of pimeloyl-ACP esters. This is Pimeloyl-[acyl-carrier protein] methyl ester esterase from Pseudoalteromonas atlantica (strain T6c / ATCC BAA-1087).